The primary structure comprises 110 residues: uncharacterized protein (110 aa).

The first 26 residues, 1–26, serve as a signal peptide directing secretion; sequence MIRNVLLAFMICSGMTLLGGCSSVMS. The disordered stretch occupies residues 87–110; it reads RVEKSEANAQATNAVIPPARMPDN.

The protein to E.coli YceK.

This is an uncharacterized protein from Escherichia coli (strain K12).